A 141-amino-acid polypeptide reads, in one-letter code: Aspartate 1-decarboxylase (141 aa).

Ser-25 (schiff-base intermediate with substrate; via pyruvic acid) is an active-site residue. Ser-25 carries the pyruvic acid (Ser) modification. Residue Thr-57 coordinates substrate. Tyr-58 acts as the Proton donor in catalysis. 73–75 contacts substrate; it reads GAA.

It belongs to the PanD family. As to quaternary structure, heterooctamer of four alpha and four beta subunits. Pyruvate is required as a cofactor. Post-translationally, is synthesized initially as an inactive proenzyme, which is activated by self-cleavage at a specific serine bond to produce a beta-subunit with a hydroxyl group at its C-terminus and an alpha-subunit with a pyruvoyl group at its N-terminus.

It is found in the cytoplasm. The enzyme catalyses L-aspartate + H(+) = beta-alanine + CO2. Its pathway is cofactor biosynthesis; (R)-pantothenate biosynthesis; beta-alanine from L-aspartate: step 1/1. In terms of biological role, catalyzes the pyruvoyl-dependent decarboxylation of aspartate to produce beta-alanine. This is Aspartate 1-decarboxylase from Salinispora arenicola (strain CNS-205).